The chain runs to 536 residues: Multicopper oxidase terE (536 aa).

A disordered region spans residues 1–21 (MHWHGLSQSTAPFSDGSPQAS). 3 Plastocyanin-like domains span residues 1–67 (MHWH…VEEK), 79–238 (ERIL…LSYN), and 354–488 (TVQK…VWMM). Residues histidine 2, histidine 4, histidine 48, and histidine 50 each contribute to the Cu cation site. A Cu cation-binding site is contributed by histidine 397.

This sequence belongs to the multicopper oxidase family.

The protein operates within secondary metabolite biosynthesis. Functionally, multicopper oxidase; part of the gene cluster that mediates the biosynthesis of terrein, a fungal metabolite with ecological, antimicrobial, antiproliferative, and antioxidative activities. The first step in the pathway is performed by the polyketide synthase terA that produces 4-hydroxy-6-methylpyranon (4-HMP), orsellinic acid (OA), and 2,3-dehydro-6-hydroxymellein (2,3-dehydro-6-HM) by condensing acetyl-CoA with two, three, or four malonyl-CoA units, respectively. 4-HMP and OA are not pathway intermediates, but are rather shunt or side products. 2,3-dehydro-6-HM is further converted to 6-hydroxymellein (6-HM) by the 6-hydroxymellein synthase terB. The monooxygenases terC and terD, the multicopper oxidase terE and the Kelch-like protein terF are then involved in the transformation of 6-HM to terrein. Even if they are co-regulated with the other terrein cluster genes, terH and terI seem to be dispensable for terrein production; whereas one or both of the 2 transporters terG and terJ are probably required for efficient secretion of metabolites. This is Multicopper oxidase terE from Aspergillus terreus (strain NIH 2624 / FGSC A1156).